Here is a 609-residue protein sequence, read N- to C-terminus: MLFLRFFIFTFFTSIFTVVVSEPPVSAKFAKRVLSATSSSSSTCPEFITIFSEGPSEYITTIYPSSKSSGRGTTNHSTIYTTINSGTVASTYTVTLADGDVVVKDIEPTAGTVTTTITSGSHEFTTTLAEASGTVPGTVEVVEPLAGTVTTTIHSGSVEYNTTLATASGTVPGTVEVVEPAVGTVTTTIYSGSEEFTTTLASASGSISGTVEVIEPTAGTVTTTIYSGDQEYTTILAEASGTVPGTVEVIEPAVGTVTTTTYSGSVEYTTTLVPASGSVSGTVEVVEPAVGTVTTTLQSGSQAFTTTVPASGSVSGTVEVVQPTGGTVTNTVYEGSQTITSTLATASGTVPGTVEVILPGPSTIYSGTVATTITYDVSSTPASTVVVIPTAVCNGERGLQYAVYNYDISSSKNQFCATSGVTDVSSFTQPAYFGSSDLDQSSPLFTGVLSSSDSVPQWTSSYNLPGYPPDATAMGSTSSACKVIVYQFFFRVPVTDTFSLDVTNVDDVFYGWFGDKAISGWSNTNYDTYAYWHATNGQTGIASFSMGSLTADTYVPVRFVVANGAGKGGFDFSFVDSEGNSYNPTSYAYTATCTESFLPFGQGNGGVDN.

The N-terminal stretch at 1–21 is a signal peptide; the sequence is MLFLRFFIFTFFTSIFTVVVS. N75 carries an N-linked (GlcNAc...) asparagine glycan. The 9 X 36 AA approximate tandem repeats stretch occupies residues 75 to 391; sequence NHSTIYTTIN…ASTVVVIPTA (317 aa). Tandem repeats lie at residues 77–110, 111–146, 147–182, 183–218, 219–254, 255–290, 291–325, 326–361, and 362–391. N161 carries an N-linked (GlcNAc...) asparagine glycan. Residues 427 to 589 form the PA14 domain; that stretch reads FTQPAYFGSS…NSYNPTSYAY (163 aa).

Belongs to the mam3/map4 family.

The protein localises to the cell surface. Functionally, may be involved in agglutination during conjugation or other aspects of colony formation. Induces flocculation when overexpressed. This chain is Putative cell agglutination protein pfl4, found in Schizosaccharomyces pombe (strain 972 / ATCC 24843) (Fission yeast).